Here is an 890-residue protein sequence, read N- to C-terminus: Probable LRR receptor-like serine/threonine-protein kinase At1g51860 (890 aa).

Residues 1–23 (MKSLHWFLHLLIIAFTVLRSVEA) form the signal peptide. Residues 24–513 (QNQAGFISLD…KESKKVPMVA (490 aa)) are Extracellular-facing. N-linked (GlcNAc...) asparagine glycans are attached at residues asparagine 49, asparagine 96, asparagine 142, asparagine 181, asparagine 256, asparagine 285, asparagine 289, asparagine 295, asparagine 312, asparagine 332, asparagine 340, asparagine 402, and asparagine 419. 3 LRR repeats span residues 412 to 435 (RIIS…SKLT), 436 to 458 (LLTV…FAEM), and 460 to 481 (SLKL…PDSL). N-linked (GlcNAc...) asparagine glycosylation is found at asparagine 465, asparagine 473, and asparagine 497. A helical membrane pass occupies residues 514–534 (IAASVAGVFALLVILAIFFVI). Topologically, residues 535–890 (KRKNVKAHKS…STSDFAPGAR (356 aa)) are cytoplasmic. Threonine 575 bears the Phosphothreonine mark. Residues 584 to 856 (NNFERVLGKG…HVVMELNDCV (273 aa)) form the Protein kinase domain. ATP-binding positions include 590 to 598 (LGKGGFGTV) and lysine 611. Tyrosine 656 bears the Phosphotyrosine mark. Aspartate 708 (proton acceptor) is an active-site residue. At serine 742 the chain carries Phosphoserine. Residues threonine 743 and threonine 748 each carry the phosphothreonine modification. At tyrosine 756 the chain carries Phosphotyrosine.

Belongs to the protein kinase superfamily. Ser/Thr protein kinase family.

It is found in the membrane. It carries out the reaction L-seryl-[protein] + ATP = O-phospho-L-seryl-[protein] + ADP + H(+). The enzyme catalyses L-threonyl-[protein] + ATP = O-phospho-L-threonyl-[protein] + ADP + H(+). The polypeptide is Probable LRR receptor-like serine/threonine-protein kinase At1g51860 (Arabidopsis thaliana (Mouse-ear cress)).